A 914-amino-acid chain; its full sequence is Isoleucine--tRNA ligase (914 aa).

Positions 64–74 match the 'HIGH' region motif; sequence PYANGNFHLGH. Glutamate 557 is an L-isoleucyl-5'-AMP binding site. Residues 598–602 carry the 'KMSKS' region motif; the sequence is AMSKS. Lysine 601 contributes to the ATP binding site. Cysteine 889, cysteine 892, cysteine 906, and cysteine 909 together coordinate Zn(2+).

It belongs to the class-I aminoacyl-tRNA synthetase family. IleS type 1 subfamily. In terms of assembly, monomer. The cofactor is Zn(2+).

Its subcellular location is the cytoplasm. It carries out the reaction tRNA(Ile) + L-isoleucine + ATP = L-isoleucyl-tRNA(Ile) + AMP + diphosphate. Its function is as follows. Catalyzes the attachment of isoleucine to tRNA(Ile). As IleRS can inadvertently accommodate and process structurally similar amino acids such as valine, to avoid such errors it has two additional distinct tRNA(Ile)-dependent editing activities. One activity is designated as 'pretransfer' editing and involves the hydrolysis of activated Val-AMP. The other activity is designated 'posttransfer' editing and involves deacylation of mischarged Val-tRNA(Ile). The polypeptide is Isoleucine--tRNA ligase (Leptospira borgpetersenii serovar Hardjo-bovis (strain JB197)).